The following is a 320-amino-acid chain: Malate dehydrogenase (320 aa).

NAD(+) is bound by residues 10–15 (GSGMIG) and Asp-34. Residues Arg-83 and Arg-89 each coordinate substrate. NAD(+) is bound by residues Asn-96 and 119 to 121 (ITN). The substrate site is built by Asn-121 and Arg-152. The Proton acceptor role is filled by His-176.

Belongs to the LDH/MDH superfamily. MDH type 3 family.

The enzyme catalyses (S)-malate + NAD(+) = oxaloacetate + NADH + H(+). Catalyzes the reversible oxidation of malate to oxaloacetate. The polypeptide is Malate dehydrogenase (Rhizobium johnstonii (strain DSM 114642 / LMG 32736 / 3841) (Rhizobium leguminosarum bv. viciae)).